The sequence spans 1092 residues: SUMO-specific isopeptidase USPL1 (1092 aa).

2 disordered regions span residues 145–168 (VYDE…TADS) and 185–207 (TKDP…EGCT). Composition is skewed to polar residues over residues 148 to 163 (ETSS…QNPI) and 197 to 206 (GRPSPQNEGC). The USP domain occupies 227-500 (VQWKNAYALC…EIHIVIWERK (274 aa)). The active-site Nucleophile is the Cys-236. The segment at 236–495 (CWLDCILSAL…EVPASEIHIV (260 aa)) is SUMO-binding. Catalysis depends on His-456, which acts as the Proton acceptor. 3 disordered regions span residues 713-749 (LKPE…SLKE), 797-859 (GGFK…STSC), and 904-930 (AALM…GSPN). A compositionally biased stretch (polar residues) spans 732 to 748 (ADSQTTTSKSLQNQSLK). Basic residues predominate over residues 810 to 819 (HVSKKARKSA). Pro residues predominate over residues 821–832 (KPPPISKPPAGP). A Phosphoserine modification is found at Ser-909.

Belongs to the peptidase C19 family. Interacts with ELL.

It is found in the nucleus. Its subcellular location is the cajal body. In terms of biological role, SUMO-specific isopeptidase involved in protein desumoylation. Specifically binds SUMO proteins with a higher affinity for SUMO2 and SUMO3 which it cleaves more efficiently. Also able to process full-length SUMO proteins to their mature forms. Plays a key role in RNA polymerase-II-mediated snRNA transcription in the Cajal bodies. Is a component of complexes that can bind to U snRNA genes. This Homo sapiens (Human) protein is SUMO-specific isopeptidase USPL1 (USPL1).